Here is a 222-residue protein sequence, read N- to C-terminus: Phosphoribosylformylglycinamidine synthase subunit PurQ (222 aa).

A Glutamine amidotransferase type-1 domain is found at 3–222; sequence SAVVLLPGLN…LFEGALGIAA (220 aa). Catalysis depends on Cys86, which acts as the Nucleophile. Residues His196 and Glu198 contribute to the active site.

In terms of assembly, part of the FGAM synthase complex composed of 1 PurL, 1 PurQ and 2 PurS subunits.

Its subcellular location is the cytoplasm. The enzyme catalyses N(2)-formyl-N(1)-(5-phospho-beta-D-ribosyl)glycinamide + L-glutamine + ATP + H2O = 2-formamido-N(1)-(5-O-phospho-beta-D-ribosyl)acetamidine + L-glutamate + ADP + phosphate + H(+). The catalysed reaction is L-glutamine + H2O = L-glutamate + NH4(+). Its pathway is purine metabolism; IMP biosynthesis via de novo pathway; 5-amino-1-(5-phospho-D-ribosyl)imidazole from N(2)-formyl-N(1)-(5-phospho-D-ribosyl)glycinamide: step 1/2. In terms of biological role, part of the phosphoribosylformylglycinamidine synthase complex involved in the purines biosynthetic pathway. Catalyzes the ATP-dependent conversion of formylglycinamide ribonucleotide (FGAR) and glutamine to yield formylglycinamidine ribonucleotide (FGAM) and glutamate. The FGAM synthase complex is composed of three subunits. PurQ produces an ammonia molecule by converting glutamine to glutamate. PurL transfers the ammonia molecule to FGAR to form FGAM in an ATP-dependent manner. PurS interacts with PurQ and PurL and is thought to assist in the transfer of the ammonia molecule from PurQ to PurL. This chain is Phosphoribosylformylglycinamidine synthase subunit PurQ, found in Mesorhizobium japonicum (strain LMG 29417 / CECT 9101 / MAFF 303099) (Mesorhizobium loti (strain MAFF 303099)).